Reading from the N-terminus, the 110-residue chain is uncharacterized protein (110 aa).

The disordered stretch occupies residues 1-72 (MWRSSNQRGV…NHRNIHLRNP (72 aa)). Positions 10-23 (VSRRRDKSMRKYTR) are enriched in basic residues. Positions 48 to 57 (KNTYTGNISS) are enriched in polar residues.

This is an uncharacterized protein from Human herpesvirus 6A (strain Uganda-1102) (HHV-6 variant A).